A 285-amino-acid polypeptide reads, in one-letter code: MDPEEQLESTEGVPAKSLSLIKHILLVLSGKGGVGKSSVTTQTALTLCGMGYNVGVLDIDLTGPSLPRMFGIEDSSIYQSADGWMPIPVETNGKGKLCVVSLGFLLGSRGTSVVWRGPKKTSMIRQFIKDVTWGELDYLLIDTPPGTSDEHISIAEELRFTNPDGAIVVTTPQGVATADVKKEINFCRKVNLRILGVIENMSGFVCPYCTECTNIFSKGGGESLAKQFDVPYLGNIPIDPKFVDLIENQKKMEGTLVELYEKSSLYPIYLEIMKKVQEESSKPQE.

30-37 (GKGGVGKS) contacts ATP. [4Fe-4S] cluster is bound by residues Cys206 and Cys209.

This sequence belongs to the Mrp/NBP35 ATP-binding proteins family. NUBP2/CFD1 subfamily. In terms of assembly, heterotetramer of 2 NBP35 and 2 CFD1 chains. The cofactor is [4Fe-4S] cluster.

It is found in the cytoplasm. In terms of biological role, component of the cytosolic iron-sulfur (Fe/S) protein assembly (CIA) machinery. Required for maturation of extramitochondrial Fe-S proteins. The NBP35-CFD1 heterotetramer forms a Fe-S scaffold complex, mediating the de novo assembly of an Fe-S cluster and its transfer to target apoproteins. Required for biogenesis and export of both ribosomal subunits, which may reflect a role in assembly of the Fe/S clusters in RLI1, a protein which performs rRNA processing and ribosome export. This is Cytosolic Fe-S cluster assembly factor CFD1 from Candida glabrata (strain ATCC 2001 / BCRC 20586 / JCM 3761 / NBRC 0622 / NRRL Y-65 / CBS 138) (Yeast).